A 353-amino-acid chain; its full sequence is Nicotinate-nucleotide--dimethylbenzimidazole phosphoribosyltransferase (353 aa).

The active-site Proton acceptor is the Glu318.

It belongs to the CobT family.

It catalyses the reaction 5,6-dimethylbenzimidazole + nicotinate beta-D-ribonucleotide = alpha-ribazole 5'-phosphate + nicotinate + H(+). It participates in nucleoside biosynthesis; alpha-ribazole biosynthesis; alpha-ribazole from 5,6-dimethylbenzimidazole: step 1/2. In terms of biological role, catalyzes the synthesis of alpha-ribazole-5'-phosphate from nicotinate mononucleotide (NAMN) and 5,6-dimethylbenzimidazole (DMB). The polypeptide is Nicotinate-nucleotide--dimethylbenzimidazole phosphoribosyltransferase (Roseiflexus castenholzii (strain DSM 13941 / HLO8)).